Consider the following 217-residue polypeptide: Thymidylate kinase (217 aa).

ATP is bound at residue 7-14 (GIEGAGKS).

The protein belongs to the thymidylate kinase family.

It carries out the reaction dTMP + ATP = dTDP + ADP. Its function is as follows. Phosphorylation of dTMP to form dTDP in both de novo and salvage pathways of dTTP synthesis. This chain is Thymidylate kinase, found in Desulfovibrio desulfuricans (strain ATCC 27774 / DSM 6949 / MB).